A 219-amino-acid chain; its full sequence is MKMRDTFLKPMHPEGRKFVGIFAAITVILFLIWSVLGWIGVGLTVWCYYFFRDPERVTPAREGLIVSPADGIVSMIEKSVPPAELGMPDQALTRISVFMSVFNCHVNRAPIAGRIAAIAYRPGKFFNASLDKASADNERNSLCIEMADGRQIAVVQIAGLVARRIVCFSSTGDTLRTGERFGLIRFGSRLDVYLPEGVEPMVDLGQTMIAGETVLADLQ.

Serine 188 serves as the catalytic Schiff-base intermediate with substrate; via pyruvic acid. Position 188 is a pyruvic acid (Ser); by autocatalysis (serine 188).

It belongs to the phosphatidylserine decarboxylase family. PSD-A subfamily. In terms of assembly, heterodimer of a large membrane-associated beta subunit and a small pyruvoyl-containing alpha subunit. The cofactor is pyruvate. Post-translationally, is synthesized initially as an inactive proenzyme. Formation of the active enzyme involves a self-maturation process in which the active site pyruvoyl group is generated from an internal serine residue via an autocatalytic post-translational modification. Two non-identical subunits are generated from the proenzyme in this reaction, and the pyruvate is formed at the N-terminus of the alpha chain, which is derived from the carboxyl end of the proenzyme. The post-translation cleavage follows an unusual pathway, termed non-hydrolytic serinolysis, in which the side chain hydroxyl group of the serine supplies its oxygen atom to form the C-terminus of the beta chain, while the remainder of the serine residue undergoes an oxidative deamination to produce ammonia and the pyruvoyl prosthetic group on the alpha chain.

The protein resides in the cell membrane. It carries out the reaction a 1,2-diacyl-sn-glycero-3-phospho-L-serine + H(+) = a 1,2-diacyl-sn-glycero-3-phosphoethanolamine + CO2. Its pathway is phospholipid metabolism; phosphatidylethanolamine biosynthesis; phosphatidylethanolamine from CDP-diacylglycerol: step 2/2. Catalyzes the formation of phosphatidylethanolamine (PtdEtn) from phosphatidylserine (PtdSer). The sequence is that of Phosphatidylserine decarboxylase proenzyme from Ruegeria pomeroyi (strain ATCC 700808 / DSM 15171 / DSS-3) (Silicibacter pomeroyi).